The sequence spans 339 residues: 3-isopropylmalate dehydrogenase (339 aa).

Positions 88, 98, 122, and 212 each coordinate substrate. D212, D236, and D240 together coordinate Mg(2+). 272–284 (GSAPDIAGQGIAD) lines the NAD(+) pocket.

The protein belongs to the isocitrate and isopropylmalate dehydrogenases family. LeuB type 2 subfamily. As to quaternary structure, homodimer. Mg(2+) serves as cofactor. It depends on Mn(2+) as a cofactor.

It is found in the cytoplasm. The enzyme catalyses (2R,3S)-3-isopropylmalate + NAD(+) = 4-methyl-2-oxopentanoate + CO2 + NADH. The protein operates within amino-acid biosynthesis; L-leucine biosynthesis; L-leucine from 3-methyl-2-oxobutanoate: step 3/4. Catalyzes the oxidation of 3-carboxy-2-hydroxy-4-methylpentanoate (3-isopropylmalate) to 3-carboxy-4-methyl-2-oxopentanoate. The product decarboxylates to 4-methyl-2 oxopentanoate. The chain is 3-isopropylmalate dehydrogenase from Corynebacterium diphtheriae (strain ATCC 700971 / NCTC 13129 / Biotype gravis).